The sequence spans 355 residues: Peptide chain release factor 1 (355 aa).

Glutamine 233 carries the N5-methylglutamine modification.

Belongs to the prokaryotic/mitochondrial release factor family. Methylated by PrmC. Methylation increases the termination efficiency of RF1.

It is found in the cytoplasm. Its function is as follows. Peptide chain release factor 1 directs the termination of translation in response to the peptide chain termination codons UAG and UAA. The protein is Peptide chain release factor 1 of Desulfitobacterium hafniense (strain DSM 10664 / DCB-2).